The primary structure comprises 383 residues: Putative glutamate--cysteine ligase 2 (383 aa).

Belongs to the glutamate--cysteine ligase type 2 family. YbdK subfamily.

The enzyme catalyses L-cysteine + L-glutamate + ATP = gamma-L-glutamyl-L-cysteine + ADP + phosphate + H(+). In terms of biological role, ATP-dependent carboxylate-amine ligase which exhibits weak glutamate--cysteine ligase activity. This Clavibacter sepedonicus (Clavibacter michiganensis subsp. sepedonicus) protein is Putative glutamate--cysteine ligase 2.